The primary structure comprises 361 residues: Chorismate synthase (361 aa).

An NADP(+)-binding site is contributed by Arg48. FMN is bound by residues 125-127 (RSS), 238-239 (NA), Gly278, 293-297 (KPTSS), and Arg319.

Belongs to the chorismate synthase family. As to quaternary structure, homotetramer. It depends on FMNH2 as a cofactor.

It carries out the reaction 5-O-(1-carboxyvinyl)-3-phosphoshikimate = chorismate + phosphate. It participates in metabolic intermediate biosynthesis; chorismate biosynthesis; chorismate from D-erythrose 4-phosphate and phosphoenolpyruvate: step 7/7. Catalyzes the anti-1,4-elimination of the C-3 phosphate and the C-6 proR hydrogen from 5-enolpyruvylshikimate-3-phosphate (EPSP) to yield chorismate, which is the branch point compound that serves as the starting substrate for the three terminal pathways of aromatic amino acid biosynthesis. This reaction introduces a second double bond into the aromatic ring system. This is Chorismate synthase from Vibrio anguillarum (strain ATCC 68554 / 775) (Listonella anguillarum).